A 213-amino-acid polypeptide reads, in one-letter code: Orotate phosphoribosyltransferase (213 aa).

Lysine 26 lines the 5-phospho-alpha-D-ribose 1-diphosphate pocket. Orotate is bound at residue 34–35 (FF). Residues 72 to 73 (YK), arginine 98, lysine 99, lysine 102, histidine 104, and 123 to 131 (DDVISAGTS) each bind 5-phospho-alpha-D-ribose 1-diphosphate. Residues serine 127 and arginine 155 each coordinate orotate.

The protein belongs to the purine/pyrimidine phosphoribosyltransferase family. PyrE subfamily. In terms of assembly, homodimer. Mg(2+) serves as cofactor.

It carries out the reaction orotidine 5'-phosphate + diphosphate = orotate + 5-phospho-alpha-D-ribose 1-diphosphate. Its pathway is pyrimidine metabolism; UMP biosynthesis via de novo pathway; UMP from orotate: step 1/2. Catalyzes the transfer of a ribosyl phosphate group from 5-phosphoribose 1-diphosphate to orotate, leading to the formation of orotidine monophosphate (OMP). This Laribacter hongkongensis (strain HLHK9) protein is Orotate phosphoribosyltransferase.